The following is a 188-amino-acid chain: ATP synthase subunit b 2 (188 aa).

A helical transmembrane segment spans residues 41–61; it reads FFWLVISFGFFYFFIARVIVP.

It belongs to the ATPase B chain family. F-type ATPases have 2 components, F(1) - the catalytic core - and F(0) - the membrane proton channel. F(1) has five subunits: alpha(3), beta(3), gamma(1), delta(1), epsilon(1). F(0) has three main subunits: a(1), b(2) and c(10-14). The alpha and beta chains form an alternating ring which encloses part of the gamma chain. F(1) is attached to F(0) by a central stalk formed by the gamma and epsilon chains, while a peripheral stalk is formed by the delta and b chains.

It localises to the cell inner membrane. Its function is as follows. F(1)F(0) ATP synthase produces ATP from ADP in the presence of a proton or sodium gradient. F-type ATPases consist of two structural domains, F(1) containing the extramembraneous catalytic core and F(0) containing the membrane proton channel, linked together by a central stalk and a peripheral stalk. During catalysis, ATP synthesis in the catalytic domain of F(1) is coupled via a rotary mechanism of the central stalk subunits to proton translocation. Functionally, component of the F(0) channel, it forms part of the peripheral stalk, linking F(1) to F(0). The b'-subunit is a diverged and duplicated form of b found in plants and photosynthetic bacteria. This is ATP synthase subunit b 2 (atpF2) from Bartonella bacilliformis (strain ATCC 35685 / KC583 / Herrer 020/F12,63).